We begin with the raw amino-acid sequence, 322 residues long: Sideroflexin-1 (322 aa).

Ser2 bears the N-acetylserine mark. Residues 2-102 (SGELPPNINI…MSAQVPMNMT (101 aa)) are Mitochondrial matrix-facing. Residues 103–120 (ITGCMMTFYRTTPAVLFW) traverse the membrane as a helical segment. Residues 121 to 146 (QWINQSFNAVVNYTNRSGDAPLTVNE) are Mitochondrial intermembrane-facing. Residues 147 to 167 (LGTAYVSATTGAVATALGLNA) form a helical membrane-spanning segment. The Mitochondrial matrix portion of the chain corresponds to 168-174 (LTKHVSP). A helical membrane pass occupies residues 175–195 (LIGRFVPFAAVAAANCINIPL). The Mitochondrial intermembrane portion of the chain corresponds to 196–228 (MRQRELRAGIPVTDENGNRLGESANAAKQAITQ). Residues 229–249 (VVISRILMAAPGMAIPPFIMN) traverse the membrane as a helical segment. At 250 to 266 (TLEKKAFLKRFPWMSAP) the chain is on the mitochondrial matrix side. The helical transmembrane segment at 267-287 (IQVGLVGFCLVFATPLCCALF) threads the bilayer. The Mitochondrial intermembrane segment spans residues 288 to 322 (PQKSSMSVTSLEAELQAKIRETSPELRRVYFNKGL).

The protein belongs to the sideroflexin family.

Its subcellular location is the mitochondrion inner membrane. It catalyses the reaction L-serine(in) = L-serine(out). The enzyme catalyses L-alanine(in) = L-alanine(out). It carries out the reaction L-cysteine(in) = L-cysteine(out). Amino acid transporter importing serine, an essential substrate of the mitochondrial branch of the one-carbon pathway, into mitochondria. Mitochondrial serine is then converted to glycine and formate, which exits to the cytosol where it is used to generate the charged folates that serve as one-carbon donors. May also transport other amino acids including alanine and cysteine. This chain is Sideroflexin-1 (SFXN1), found in Sus scrofa (Pig).